We begin with the raw amino-acid sequence, 626 residues long: Colicin-Ia (626 aa).

The translocation (T) stretch occupies residues 23-225; the sequence is EIMAVDIYVN…TRLSELEKNG (203 aa). The segment covering 276 to 286 has biased composition (polar residues); it reads QQLTQQKNTPD. A disordered region spans residues 276-308; the sequence is QQLTQQKNTPDGKTIVSPEKFPGRSSTNHSIVV. A receptor-binding (R) region spans residues 282-385; it reads KNTPDGKTIV…LRQRLLDARN (104 aa). The segment at 450-626 is channel (C); that stretch reads KDAINFTTEF…VEKANKFWGI (177 aa). The next 2 membrane-spanning stretches (helical) occupy residues 580–594 and 597–612; these read ATAL…LTGS and GIIG…GALI.

The protein belongs to the channel forming colicin family.

The protein resides in the cell membrane. Its function is as follows. This colicin is a channel-forming colicin. This class of transmembrane toxins depolarize the cytoplasmic membrane, leading to dissipation of cellular energy. In terms of biological role, colicins are polypeptide toxins produced by and active against E.coli and closely related bacteria. This is Colicin-Ia (cia) from Escherichia coli.